The chain runs to 731 residues: Unconventional prefoldin RPB5 interactor-like protein (731 aa).

Coiled-coil stretches lie at residues 91–115 (RLKLAEEQLKKLAVENDLWQKKLHT) and 143–176 (LAEHRKRMRQQKQKERLEREAEPVKKDNEVLRKL). Residues 205–217 (PLKSTNESSPKSL) are compositionally biased toward polar residues. Disordered regions lie at residues 205 to 224 (PLKSTNESSPKSLTQEEEDE), 259 to 302 (MSGE…EEEV), and 370 to 396 (ASEEEEEVVENNHLPDEPSKELSTVSE). A coiled-coil region spans residues 220 to 258 (EEEDELWKKLEAEEQNEADELSSEAEESLKTTDNLVRQL). The segment covering 285–300 (ISEDDGDDDDEGDQEE) has biased composition (acidic residues). Coiled-coil stretches lie at residues 357–379 (DDLQDLVFEQELEASEEEEEVVE) and 452–477 (SIKTKRQTTQDILQKVERNIEFVKEN). Composition is skewed to polar residues over residues 508 to 518 (GAIPSPSSDQS) and 575 to 599 (SQFSKPNSSEICFTHSGSITPTSND). 3 disordered regions span residues 508 to 527 (GAIPSPSSDQSDGIPGKPSD), 567 to 682 (GSAY…DLRD), and 694 to 731 (VEKEPTAPEPLPPGKFIDSHAPKKRVSRFKEQRALNKT). Basic and acidic residues predominate over residues 611-621 (FYEKYEKDRAK). A compositionally biased stretch (polar residues) spans 623-644 (SKSNSSEGDATDPESATKSILR). Positions 661–673 (KKGRKVRNQKKKE) are enriched in basic residues. Residues 721–731 (RFKEQRALNKT) show a composition bias toward basic and acidic residues.

It belongs to the RNA polymerase II subunit 5-mediating protein family. Interacts with serine/threonine-protein phosphatases flw/PP1beta9C and Pp1-87B with higher affinity for Pp1-87B.

The protein resides in the cytoplasm. It localises to the chromosome. It is found in the nucleus. Functionally, inhibits the activity of serine/threonine-protein phosphatases flw/PP1beta9C and Pp1-87B. Required for germ line cell viability and differentiation, normal transcriptional activity and maintenance of DNA integrity. This Drosophila melanogaster (Fruit fly) protein is Unconventional prefoldin RPB5 interactor-like protein.